We begin with the raw amino-acid sequence, 413 residues long: Multifunctional CCA protein (413 aa).

2 residues coordinate ATP: Gly-8 and Arg-11. CTP-binding residues include Gly-8 and Arg-11. Asp-21 and Asp-23 together coordinate Mg(2+). Residues Arg-91, Arg-143, and Arg-146 each contribute to the ATP site. Arg-91, Arg-143, and Arg-146 together coordinate CTP. Residues 232–333 (TGVHVMMVVD…VRLFERSDAL (102 aa)) form the HD domain.

It belongs to the tRNA nucleotidyltransferase/poly(A) polymerase family. Bacterial CCA-adding enzyme type 1 subfamily. As to quaternary structure, monomer. Can also form homodimers and oligomers. Requires Mg(2+) as cofactor. It depends on Ni(2+) as a cofactor.

It carries out the reaction a tRNA precursor + 2 CTP + ATP = a tRNA with a 3' CCA end + 3 diphosphate. The catalysed reaction is a tRNA with a 3' CCA end + 2 CTP + ATP = a tRNA with a 3' CCACCA end + 3 diphosphate. In terms of biological role, catalyzes the addition and repair of the essential 3'-terminal CCA sequence in tRNAs without using a nucleic acid template. Adds these three nucleotides in the order of C, C, and A to the tRNA nucleotide-73, using CTP and ATP as substrates and producing inorganic pyrophosphate. tRNA 3'-terminal CCA addition is required both for tRNA processing and repair. Also involved in tRNA surveillance by mediating tandem CCA addition to generate a CCACCA at the 3' terminus of unstable tRNAs. While stable tRNAs receive only 3'-terminal CCA, unstable tRNAs are marked with CCACCA and rapidly degraded. This is Multifunctional CCA protein from Burkholderia cenocepacia (strain HI2424).